A 231-amino-acid chain; its full sequence is 2-C-methyl-D-erythritol 4-phosphate cytidylyltransferase (231 aa).

The protein belongs to the IspD/TarI cytidylyltransferase family. IspD subfamily.

It catalyses the reaction 2-C-methyl-D-erythritol 4-phosphate + CTP + H(+) = 4-CDP-2-C-methyl-D-erythritol + diphosphate. It functions in the pathway isoprenoid biosynthesis; isopentenyl diphosphate biosynthesis via DXP pathway; isopentenyl diphosphate from 1-deoxy-D-xylulose 5-phosphate: step 2/6. In terms of biological role, catalyzes the formation of 4-diphosphocytidyl-2-C-methyl-D-erythritol from CTP and 2-C-methyl-D-erythritol 4-phosphate (MEP). This is 2-C-methyl-D-erythritol 4-phosphate cytidylyltransferase from Shewanella pealeana (strain ATCC 700345 / ANG-SQ1).